Here is a 120-residue protein sequence, read N- to C-terminus: Large ribosomal subunit protein eL8 (120 aa).

Belongs to the eukaryotic ribosomal protein eL8 family. In terms of assembly, part of the 50S ribosomal subunit. Probably part of the RNase P complex.

It is found in the cytoplasm. Functionally, multifunctional RNA-binding protein that recognizes the K-turn motif in ribosomal RNA, the RNA component of RNase P, box H/ACA, box C/D and box C'/D' sRNAs. This Halobacterium salinarum (strain ATCC 29341 / DSM 671 / R1) protein is Large ribosomal subunit protein eL8.